A 279-amino-acid chain; its full sequence is Putative hydroxypyruvate isomerase (279 aa).

Catalysis depends on proton donor/acceptor residues E155 and E256. The segment at 260–279 is disordered; sequence GDDPSAQSFSWLPAGARAAR.

It belongs to the hyi family.

The catalysed reaction is 3-hydroxypyruvate = 2-hydroxy-3-oxopropanoate. Its function is as follows. Catalyzes the reversible isomerization between hydroxypyruvate and 2-hydroxy-3-oxopropanoate (also termed tartronate semialdehyde). The sequence is that of Putative hydroxypyruvate isomerase from Streptomyces coelicolor (strain ATCC BAA-471 / A3(2) / M145).